The sequence spans 212 residues: Uridine kinase (212 aa).

12–19 (GGSGGGKT) lines the ATP pocket.

It belongs to the uridine kinase family.

Its subcellular location is the cytoplasm. It catalyses the reaction uridine + ATP = UMP + ADP + H(+). The catalysed reaction is cytidine + ATP = CMP + ADP + H(+). It functions in the pathway pyrimidine metabolism; CTP biosynthesis via salvage pathway; CTP from cytidine: step 1/3. It participates in pyrimidine metabolism; UMP biosynthesis via salvage pathway; UMP from uridine: step 1/1. The polypeptide is Uridine kinase (Streptococcus pneumoniae serotype 19F (strain G54)).